The chain runs to 521 residues: Cytochrome P450 1A1 (521 aa).

Phe-229 provides a ligand contact to substrate. Residue Cys-463 coordinates heme.

It belongs to the cytochrome P450 family. Heme serves as cofactor.

It is found in the endoplasmic reticulum membrane. Its subcellular location is the microsome membrane. It carries out the reaction an organic molecule + reduced [NADPH--hemoprotein reductase] + O2 = an alcohol + oxidized [NADPH--hemoprotein reductase] + H2O + H(+). In terms of biological role, cytochromes P450 are a group of heme-thiolate monooxygenases. They oxidize a variety of structurally unrelated compounds, including steroids, fatty acids, and xenobiotics. This chain is Cytochrome P450 1A1 (cyp1a1), found in Limanda limanda (Common dab).